Here is an 88-residue protein sequence, read N- to C-terminus: Small ribosomal subunit protein bS20 (88 aa).

The protein belongs to the bacterial ribosomal protein bS20 family.

Functionally, binds directly to 16S ribosomal RNA. This chain is Small ribosomal subunit protein bS20, found in Bradyrhizobium sp. (strain BTAi1 / ATCC BAA-1182).